A 752-amino-acid chain; its full sequence is Zinc finger protein 425 (752 aa).

A KRAB domain is found at valine 9–arginine 80. 19 consecutive C2H2-type zinc fingers follow at residues tyrosine 190 to histidine 212, phenylalanine 246 to histidine 268, tyrosine 274 to histidine 296, phenylalanine 302 to histidine 324, phenylalanine 330 to histidine 352, phenylalanine 358 to histidine 380, phenylalanine 386 to histidine 408, phenylalanine 414 to histidine 436, phenylalanine 442 to histidine 464, phenylalanine 470 to histidine 492, phenylalanine 498 to histidine 520, phenylalanine 526 to histidine 548, phenylalanine 554 to histidine 576, phenylalanine 582 to histidine 604, tyrosine 610 to histidine 632, phenylalanine 638 to histidine 660, phenylalanine 666 to histidine 688, phenylalanine 694 to histidine 716, and phenylalanine 722 to histidine 744.

It belongs to the krueppel C2H2-type zinc-finger protein family.

The protein localises to the nucleus. The protein resides in the cytoplasm. Acts as a transcriptional repressor. The chain is Zinc finger protein 425 (ZNF425) from Homo sapiens (Human).